Consider the following 1037-residue polypeptide: MEEQVANAIEIASNPSADPALKTQAFEFVNQLRSDPSGWQVCLSLFTQTPQRSGIVRHVALEVVNSAAQGGLIDLQALAYVKDGLLAYLRQVYGQDAGASDPPNIQNKIAQTITFLFSALYASGWESFFDDLLSLTHKSPSSTTRDNASGIIFYLRVINSIHDEIGDVLVSRSRNEQDKANALKDLIRQRDMQKITSSWQQILSEWRDGNDVIVEMCLKAVGSWVSWIDIGLVVNQTMLDLLFQQLGRAQKEDLRQGEEKVRDAAVDVFTEIIGKKMKPEDKIDMIIFLNLDTIVSQLSNSPPLHGNRFTFKYDTDLAETVAKLVNITVIDIVRALEQEGVSAECKEKANGLLQAFLPHILRYFSDEYDEVCSTVIPCVSDLLTYLRRIAKVNPALASQHSSILLPILKAIIAKMRYDETSSWGEEDEQTDEAEFQELRKRLGILQQMIASVNEQLYMEAVSEMVATTFENLRQSGSQMDWRDLDLALHEMFLFGDLAVKAGSLYTKSNPNNQAAERLIEMMLRMVESDIRSFTHPATQLQYMEICVRYSSFFHHHTHLIPGVLENFLQLVHHPIKKVKTRSWYLFQRLVKQLRQYVGNVAQTVVEALGDLLVIRAELPSEVSEGDEMSSEDHDLADAIFNSQLYLFEAVGIICSTPTVSPDKQVLYAQAVLNPIFLDMEKNLEAAKSQDERAILQIHHDIMALGTLARGFSDWMPGTNTPATLPAPEVSAAFNQVAEATLVALESLKSSFNVRTAARFAFSRLIGVLGSRILPQLPRWIDGLLTQTSSRDEMALFLRLLDQVIFGFKGEIYSILDTLLTPFLQRVFSGIADPTTGTDDEIQLAELKREYLNFLLAVLNNDLGAVIISERNQPIFETVISTIEHFSKDIDDFTTAKMAFSVLSKMSSSWGGPDVIAEASNGAPLAQAPLPGFGQFMITRFSPLCWALPSTPSFNSKDAQAKQVLAEAGGLQRTIYAKTGMEYLTYLRDRELPGMGMGAELIEEFVGALSRLDLKGFRQFFPVCLSNFHHSLDLNMNN.

This sequence belongs to the exportin family.

It localises to the nucleus. It is found in the cytoplasm. In terms of biological role, tRNA nucleus export receptor which facilitates tRNA translocation across the nuclear pore complex. Involved in pre-tRNA splicing, probably by affecting the interaction of pre-tRNA with splicing endonuclease. This chain is Exportin-T (los1), found in Neosartorya fischeri (strain ATCC 1020 / DSM 3700 / CBS 544.65 / FGSC A1164 / JCM 1740 / NRRL 181 / WB 181) (Aspergillus fischerianus).